Consider the following 933-residue polypeptide: DNA repair-scaffolding protein (933 aa).

Disordered stretches follow at residues 1-34, 67-174, and 205-224; these read MSGA…LRRG, SEKT…KGTL, and YSSD…IDSE. 3 stretches are compositionally biased toward basic and acidic residues: residues 16 to 29, 71 to 87, and 119 to 132; these read WHIE…ERSQ, GITE…KTET, and RDGR…RLGD. The segment covering 138 to 148 has biased composition (acidic residues); it reads PEDEDIEDELQ. The tract at residues 175–469 is necessary for interaction with RAD51; sequence DISDCDSCAS…GTGWTHGHEK (295 aa). The segment covering 214 to 224 has biased composition (basic and acidic residues); sequence DPEHSLFIDSE.

As to quaternary structure, found in a complex, at least composed of BLM, RAD51 and SPIDR; the complex formation is mediated by SPIDR. Interacts (via C-terminal region) with BLM; the interaction is direct. Interacts with RAD51; the interaction is direct. Interacts (via the C-terminal region) with FIGNL1 (via N-terminal one-half region); the interaction is direct.

It is found in the nucleus. Functionally, plays a role in DNA double-strand break (DBS) repair via homologous recombination (HR). Serves as a scaffolding protein that helps to promote the recruitment of DNA-processing enzymes like the helicase BLM and recombinase RAD51 to site of DNA damage, and hence contributes to maintain genomic integrity. This chain is DNA repair-scaffolding protein (Spidr), found in Mus musculus (Mouse).